Consider the following 684-residue polypeptide: Phenoloxidase 2 (684 aa).

Residues 1-51 (MSNTAVLNDLVALYDRPTEPMFRVKAKKSFKVPKEYVTDRFKNVAVEISNR) constitute a propeptide, removed by PPAF1. N-linked (GlcNAc...) asparagine glycosylation is found at N81 and N91. Residues H209, H213, and H238 each coordinate Cu cation. The N-linked (GlcNAc...) asparagine glycan is linked to N330. The active-site Proton acceptor is the E350. Cu cation-binding residues include H365, H369, and H405. N-linked (GlcNAc...) asparagine glycans are attached at residues N416, N487, N491, and N546. Disulfide bonds link C581/C623 and C583/C630.

It belongs to the tyrosinase family. As to quaternary structure, dimer. Might form a homodimer or a heterodimer with PPO1. Might interact with PPAF2 (via CLIP domain); the interaction might be required for PPO2 activity. Cu(2+) is required as a cofactor. Precursor cleaved by PPAF1. Hemocytes.

It localises to the secreted. Functionally, this is a copper-containing oxidase that functions in the formation of pigments such as melanins and other polyphenolic compounds. Catalyzes the oxidation of o-diphenols (N-acetyldopamine, 4-methylcatechol and dopamine). Cannot oxidize monophenols and p-phenols (L-tyrosine, tyramine, gentisic acid and hydroquinone). Binds to the surface of hemocytes and is involved in hemocyte melanization. Activation of the enzyme in response to bacterial lipopolysaccharides (LPS) suggests it may play a role in innate immunity. The protein is Phenoloxidase 2 of Holotrichia diomphalia (Korean black chafer).